The sequence spans 238 residues: uncharacterized protein (238 aa).

7 helical membrane-spanning segments follow: residues 15-37, 50-69, 79-96, 101-118, 128-150, 163-183, and 203-225; these read FGAL…VLLP, ARAG…CGTL, LPFH…LYFI, IFFN…VAVL, ILYA…FSLL, CAVL…RRLG, and FFVY…YLPF.

It localises to the cell membrane. This is an uncharacterized protein from Treponema pallidum (strain Nichols).